Here is a 120-residue protein sequence, read N- to C-terminus: MATKSPVNPKVPLVQEPDRDEGGAVVLERRTQKTKPPHMYQVVMLNDDYTPMEFVVVVIQEFFGKDLEAATRIMLKIHLDGKGVCGVYSKDVAATKVDQVLDAANKAGHPLKCISEPVGF.

A disordered region spans residues M1 to D20.

This sequence belongs to the ClpS family. Binds to the N-terminal domain of the chaperone ClpA.

Functionally, involved in the modulation of the specificity of the ClpAP-mediated ATP-dependent protein degradation. In Albidiferax ferrireducens (strain ATCC BAA-621 / DSM 15236 / T118) (Rhodoferax ferrireducens), this protein is ATP-dependent Clp protease adapter protein ClpS.